Here is a 361-residue protein sequence, read N- to C-terminus: 5-formaminoimidazole-4-carboxamide-1-(beta)-D-ribofuranosyl 5'-monophosphate synthetase (361 aa).

Positions 27 and 94 each coordinate 5-amino-1-(5-phospho-beta-D-ribosyl)imidazole-4-carboxamide. The ATP-grasp domain occupies 116-348 (RAILRWEAER…MGQRIAKEIK (233 aa)). Residues 146-208 (PDEI…ANYC) and glutamate 230 contribute to the ATP site. A 5-amino-1-(5-phospho-beta-D-ribosyl)imidazole-4-carboxamide-binding site is contributed by asparagine 258. Positions 297 and 310 each coordinate Mg(2+).

Belongs to the phosphohexose mutase family. It depends on Mg(2+) as a cofactor. Requires Mn(2+) as cofactor.

The catalysed reaction is 5-amino-1-(5-phospho-beta-D-ribosyl)imidazole-4-carboxamide + formate + ATP = 5-formamido-1-(5-phospho-D-ribosyl)imidazole-4-carboxamide + ADP + phosphate. Its pathway is purine metabolism; IMP biosynthesis via de novo pathway; 5-formamido-1-(5-phospho-D-ribosyl)imidazole-4-carboxamide from 5-amino-1-(5-phospho-D-ribosyl)imidazole-4-carboxamide (formate route): step 1/1. In terms of biological role, catalyzes the ATP- and formate-dependent formylation of 5-aminoimidazole-4-carboxamide-1-beta-d-ribofuranosyl 5'-monophosphate (AICAR) to 5-formaminoimidazole-4-carboxamide-1-beta-d-ribofuranosyl 5'-monophosphate (FAICAR) in the absence of folates. This is 5-formaminoimidazole-4-carboxamide-1-(beta)-D-ribofuranosyl 5'-monophosphate synthetase from Methanococcus vannielii (strain ATCC 35089 / DSM 1224 / JCM 13029 / OCM 148 / SB).